A 333-amino-acid polypeptide reads, in one-letter code: tRNA N6-adenosine threonylcarbamoyltransferase (333 aa).

The Fe cation site is built by His-118 and His-122. Substrate is bound by residues 140–144 (VVSGG), Asp-173, Gly-186, and Asn-274. Position 298 (Asp-298) interacts with Fe cation.

This sequence belongs to the KAE1 / TsaD family. The cofactor is Fe(2+).

It localises to the cytoplasm. The enzyme catalyses L-threonylcarbamoyladenylate + adenosine(37) in tRNA = N(6)-L-threonylcarbamoyladenosine(37) in tRNA + AMP + H(+). Its function is as follows. Required for the formation of a threonylcarbamoyl group on adenosine at position 37 (t(6)A37) in tRNAs that read codons beginning with adenine. Is involved in the transfer of the threonylcarbamoyl moiety of threonylcarbamoyl-AMP (TC-AMP) to the N6 group of A37, together with TsaE and TsaB. TsaD likely plays a direct catalytic role in this reaction. In Deinococcus geothermalis (strain DSM 11300 / CIP 105573 / AG-3a), this protein is tRNA N6-adenosine threonylcarbamoyltransferase.